Here is a 265-residue protein sequence, read N- to C-terminus: MTYKAQYTPGETQIAENRRKHMDPDYEFRKLREVSDEDLVKVLGHRNPGESYKSVHPPLDEMDFEEDIVRDMVEPIQGAKEGVRVRYIQFADSMYNAPAQPYDRARTYMWRYRGVDTGTLSGRQVIEMRELDLEGVSKELVETELFDPATTGIRGATVHGHSLRLDENGLMFDALQRYVFDEEKGHVVYVKDQVGRPLDEPVDMGQPLGEDELKKITTIYRKDNIAMRDDKEAIEVVENIHTGRTMGGFGMDVFKDDLRKRLGDD.

R123 lines the coenzyme M pocket.

The protein belongs to the methyl-coenzyme M reductase gamma subunit family. As to quaternary structure, MCR is a hexamer of two alpha, two beta, and two gamma chains, forming a dimer of heterotrimers. It depends on coenzyme F430 as a cofactor.

The enzyme catalyses coenzyme B + methyl-coenzyme M = methane + coenzyme M-coenzyme B heterodisulfide. Its pathway is one-carbon metabolism; methyl-coenzyme M reduction; methane from methyl-coenzyme M: step 1/1. Its function is as follows. Component of the methyl-coenzyme M reductase (MCR) I that catalyzes the reductive cleavage of methyl-coenzyme M (CoM-S-CH3 or 2-(methylthio)ethanesulfonate) using coenzyme B (CoB or 7-mercaptoheptanoylthreonine phosphate) as reductant which results in the production of methane and the mixed heterodisulfide of CoB and CoM (CoM-S-S-CoB). This is the final step in methanogenesis. The sequence is that of Methyl-coenzyme M reductase II subunit gamma (mrtG) from Methanothermobacter thermautotrophicus (strain ATCC 29096 / DSM 1053 / JCM 10044 / NBRC 100330 / Delta H) (Methanobacterium thermoautotrophicum).